The sequence spans 58 residues: Large ribosomal subunit protein bL32 (58 aa).

It belongs to the bacterial ribosomal protein bL32 family.

This Limosilactobacillus fermentum (strain NBRC 3956 / LMG 18251) (Lactobacillus fermentum) protein is Large ribosomal subunit protein bL32.